Here is a 490-residue protein sequence, read N- to C-terminus: MERLPHGRRDRSGGCRPHLAPGRAAAPASAARSVSSGIPVSATFLRPPGLFLRSTASSGRAGCAPGPGLDRALGAVGCGYPRTPKCARCRNHGVVSALKGHKRFCRWRDCACAKCTLIAERQRVMAAQVALRRQQAQEESEARGLHRLLYQGSSGSGAQASGGSGRTESPQVLNNPMAVAVLGAGASRHPGSRSVPTFEVFQQDYADRKQEPKQRNCESCQSRQEEPVSNTHHHSLGSSKGNVTVEKQGFMSSIPEHPDKSTIILSPCPTDQSGGEDSPRSFSSSDLESGNESEWARDYIATRASLSTVTSRPRDPLGILTRIFPGYKHSRLEGILQFCKGDVVQAIEQILNGREHKPDCRDLARADLENAAFQRASDFSLAGIGFGTLSNKSALSPLEAASAAYGGDSTLYSFNPRLAFSPLRLAYSSPGRALSGFVSPYLTPGLVPALPFRPTLDYAFPGMIREPSHLPSKHLVAGGRLYFRPNQEHL.

Residues 1 to 13 (MERLPHGRRDRSG) show a composition bias toward basic and acidic residues. The segment at 1–31 (MERLPHGRRDRSGGCRPHLAPGRAAAPASAA) is disordered. Over residues 20–31 (APGRAAAPASAA) the composition is skewed to low complexity. Positions 86–133 (CARCRNHGVVSALKGHKRFCRWRDCACAKCTLIAERQRVMAAQVALRR) form a DNA-binding region, DM. Disordered regions lie at residues 152–171 (GSSGSGAQASGGSGRTESPQ) and 207–289 (DRKQ…DLES). The segment covering 207–216 (DRKQEPKQRN) has biased composition (basic and acidic residues). Polar residues-rich tracts occupy residues 217 to 242 (CESCQSRQEEPVSNTHHHSLGSSKGN) and 269 to 289 (PTDQSGGEDSPRSFSSSDLES). In terms of domain architecture, DMA spans 314-349 (RDPLGILTRIFPGYKHSRLEGILQFCKGDVVQAIEQ).

The protein belongs to the DMRT family. In terms of tissue distribution, widely expressed, with highest levels in ovary, testis, epididymis, preputial gland, vomeronasal organ, liver, salivary glands and heart. Also expressed throughout the brain with highest levels in the olfactory bulbs and medulla. Detected at similar levels in gonads of both sexes.

It is found in the nucleus. The sequence is that of Doublesex- and mab-3-related transcription factor A1 (Dmrta1) from Mus musculus (Mouse).